Reading from the N-terminus, the 357-residue chain is Prostaglandin E2 receptor EP2 subtype (357 aa).

Over 1-24 (MDNSFNDSRRVENCESRQYLLSDE) the chain is Extracellular. An N-linked (GlcNAc...) asparagine glycan is attached at Asn6. Residues 25–48 (SPAISSVMFTAGVLGNLIALALLA) form a helical membrane-spanning segment. The Cytoplasmic segment spans residues 49–66 (RRWRGDTGCSAGSRTSIS). Residues 67-92 (LFHVLVTELVLTDLLGTCLISPVVLA) form a helical membrane-spanning segment. At 93–112 (SYSRNQTLVALAPESRACTY) the chain is on the extracellular side. Residues Cys110 and Cys188 are joined by a disulfide bond. The helical transmembrane segment at 113 to 133 (FAFTMTFFSLATMLMLFAMAL) threads the bilayer. Over 134–152 (ERYLAIGHPYFYRRRVSRR) the chain is Cytoplasmic. The chain crosses the membrane as a helical span at residues 153–177 (GGLAVLPAIYGVSLLFCSLPLLNYG). Residues 178–199 (EYVQYCPGTWCFIQHGRTAYLQ) are Extracellular-facing. Residues 200 to 224 (LYATVLLLLIVAVLGCNISVILNLI) traverse the membrane as a helical segment. At 225–262 (RMQLRSKRSRCGLSGSSLRGPGSRRRGERTSMAEETDH) the chain is on the cytoplasmic side. Residues 235 to 245 (CGLSGSSLRGP) show a composition bias toward low complexity. Residues 235–255 (CGLSGSSLRGPGSRRRGERTS) are disordered. A helical membrane pass occupies residues 263–286 (LILLAIMTITFAVCSLPFTIFAYM). Residues 287-299 (DETSSRKEKWDLR) are Extracellular-facing. The helical transmembrane segment at 300–323 (ALRFLSVNSIIDPWVFVILRPPVL) threads the bilayer. Residues 324–357 (RLMRSVLCCRTSLRAPEAPGASCSTQQTDLCGQL) lie on the Cytoplasmic side of the membrane.

This sequence belongs to the G-protein coupled receptor 1 family.

It localises to the cell membrane. Functionally, receptor for prostaglandin E2 (PGE2). The activity of this receptor is mediated by G(s) proteins that stimulate adenylate cyclase. The subsequent raise in intracellular cAMP is responsible for the relaxing effect of this receptor on smooth muscle. The chain is Prostaglandin E2 receptor EP2 subtype (Ptger2) from Rattus norvegicus (Rat).